The primary structure comprises 298 residues: Lysozyme-like protein 1 (298 aa).

The signal sequence occupies residues 1–16; the sequence is MLKLAFVTFLFALASA. The region spanning 59-277 is the Ch-type lysozyme domain; that stretch reads YAYAVDISVP…AAASSKNTDF (219 aa).

The protein belongs to the glycosyl hydrolase 25 family. As to expression, expressed in intestine, IL2 and IL6 neurons and some neurons in the head ganglia.

Its subcellular location is the cytoplasmic vesicle lumen. Its function is as follows. Involved in resistance to Gram-negative bacterium S.marcescens and to bacterium Gram-positive S.aureus infection. This chain is Lysozyme-like protein 1, found in Caenorhabditis elegans.